Reading from the N-terminus, the 198-residue chain is Recombination protein RecR (198 aa).

The C4-type zinc-finger motif lies at 57-72 (CSVCCNLTDQDPCQIC). In terms of domain architecture, Toprim spans 80–175 (STICVVQEPR…KVTRIARGLP (96 aa)).

It belongs to the RecR family.

In terms of biological role, may play a role in DNA repair. It seems to be involved in an RecBC-independent recombinational process of DNA repair. It may act with RecF and RecO. The chain is Recombination protein RecR from Symbiobacterium thermophilum (strain DSM 24528 / JCM 14929 / IAM 14863 / T).